Here is a 625-residue protein sequence, read N- to C-terminus: 1-deoxy-D-xylulose-5-phosphate synthase (625 aa).

Thiamine diphosphate-binding positions include histidine 80 and 121–123; that span reads GHS. Aspartate 152 serves as a coordination point for Mg(2+). Residues 153-154, asparagine 181, tyrosine 290, and glutamate 371 contribute to the thiamine diphosphate site; that span reads GA. Asparagine 181 is a Mg(2+) binding site.

The protein belongs to the transketolase family. DXPS subfamily. In terms of assembly, homodimer. The cofactor is Mg(2+). Requires thiamine diphosphate as cofactor.

The enzyme catalyses D-glyceraldehyde 3-phosphate + pyruvate + H(+) = 1-deoxy-D-xylulose 5-phosphate + CO2. Its pathway is metabolic intermediate biosynthesis; 1-deoxy-D-xylulose 5-phosphate biosynthesis; 1-deoxy-D-xylulose 5-phosphate from D-glyceraldehyde 3-phosphate and pyruvate: step 1/1. Catalyzes the acyloin condensation reaction between C atoms 2 and 3 of pyruvate and glyceraldehyde 3-phosphate to yield 1-deoxy-D-xylulose-5-phosphate (DXP). This Haemophilus influenzae (strain ATCC 51907 / DSM 11121 / KW20 / Rd) protein is 1-deoxy-D-xylulose-5-phosphate synthase.